Consider the following 140-residue polypeptide: ATP synthase epsilon chain (140 aa).

It belongs to the ATPase epsilon chain family. F-type ATPases have 2 components, CF(1) - the catalytic core - and CF(0) - the membrane proton channel. CF(1) has five subunits: alpha(3), beta(3), gamma(1), delta(1), epsilon(1). CF(0) has three main subunits: a, b and c.

It localises to the cell inner membrane. Its function is as follows. Produces ATP from ADP in the presence of a proton gradient across the membrane. The sequence is that of ATP synthase epsilon chain from Neisseria gonorrhoeae (strain ATCC 700825 / FA 1090).